We begin with the raw amino-acid sequence, 86 residues long: Toxin To8 (86 aa).

The first 20 residues, 1–20 (MTRFVLFISCFFLIGMVVEC), serve as a signal peptide directing secretion. The region spanning 21–83 (KEGYLLGSRG…LWESDTNECG (63 aa)) is the LCN-type CS-alpha/beta domain. 4 disulfide bridges follow: C31–C82, C35–C57, C43–C63, and C47–C65. C82 is modified (cysteine amide).

Belongs to the long (4 C-C) scorpion toxin superfamily. Sodium channel inhibitor family. Beta subfamily. In terms of tissue distribution, expressed by the venom gland.

The protein localises to the secreted. Functionally, beta toxins bind voltage-independently at site-4 of sodium channels (Nav) and shift the voltage of activation toward more negative potentials thereby affecting sodium channel activation and promoting spontaneous and repetitive firing. The sequence is that of Toxin To8 from Tityus obscurus (Amazonian scorpion).